The sequence spans 333 residues: Glycerol-3-phosphate dehydrogenase [NAD(P)+] (333 aa).

4 residues coordinate NADPH: Ser-13, Trp-14, Arg-34, and Lys-108. Sn-glycerol 3-phosphate-binding residues include Lys-108, Gly-137, and Ser-139. Ala-141 is a binding site for NADPH. Sn-glycerol 3-phosphate-binding residues include Lys-192, Asp-245, Ser-255, Arg-256, and Asn-257. Lys-192 acts as the Proton acceptor in catalysis. Arg-256 is a binding site for NADPH. Glu-282 serves as a coordination point for NADPH.

The protein belongs to the NAD-dependent glycerol-3-phosphate dehydrogenase family.

Its subcellular location is the cytoplasm. The enzyme catalyses sn-glycerol 3-phosphate + NAD(+) = dihydroxyacetone phosphate + NADH + H(+). It carries out the reaction sn-glycerol 3-phosphate + NADP(+) = dihydroxyacetone phosphate + NADPH + H(+). It participates in membrane lipid metabolism; glycerophospholipid metabolism. In terms of biological role, catalyzes the reduction of the glycolytic intermediate dihydroxyacetone phosphate (DHAP) to sn-glycerol 3-phosphate (G3P), the key precursor for phospholipid synthesis. The sequence is that of Glycerol-3-phosphate dehydrogenase [NAD(P)+] from Thioalkalivibrio sulfidiphilus (strain HL-EbGR7).